Reading from the N-terminus, the 1211-residue chain is DNA-directed RNA polymerase subunit beta' (1211 aa).

The Zn(2+) site is built by cysteine 60, cysteine 62, cysteine 75, and cysteine 78. Residues aspartate 449, aspartate 451, and aspartate 453 each contribute to the Mg(2+) site. Zn(2+)-binding residues include cysteine 818, cysteine 892, cysteine 899, and cysteine 902.

It belongs to the RNA polymerase beta' chain family. The RNAP catalytic core consists of 2 alpha, 1 beta, 1 beta' and 1 omega subunit. When a sigma factor is associated with the core the holoenzyme is formed, which can initiate transcription. Mg(2+) serves as cofactor. Zn(2+) is required as a cofactor.

It carries out the reaction RNA(n) + a ribonucleoside 5'-triphosphate = RNA(n+1) + diphosphate. DNA-dependent RNA polymerase catalyzes the transcription of DNA into RNA using the four ribonucleoside triphosphates as substrates. The protein is DNA-directed RNA polymerase subunit beta' of Limosilactobacillus reuteri (strain DSM 20016) (Lactobacillus reuteri).